Here is a 1057-residue protein sequence, read N- to C-terminus: Histone deacetylase complex subunit SAP130 (1057 aa).

Positions 1–69 (MSSQQFPRLG…LPPREEKQEP (69 aa)) are disordered. The segment covering 14 to 28 (PGLSQPPSQIASSGS) has biased composition (polar residues). Residues 41-54 (EAGRDADVGTREHV) are compositionally biased toward basic and acidic residues. Arg206 is modified (omega-N-methylarginine). Thr329 is subject to Phosphothreonine. Residues Ser416 and Ser439 each carry the phosphoserine modification. Disordered stretches follow at residues 619 to 695 (TTVV…KSEV) and 718 to 740 (PTVA…IAAA). Residues 620-641 (TVVQTHSQSASTNTPAQGSSPR) are compositionally biased toward polar residues. Residue Lys794 forms a Glycyl lysine isopeptide (Lys-Gly) (interchain with G-Cter in SUMO2) linkage. A disordered region spans residues 827–873 (NLSMPPSDLPPGASPRKKPRKQQHVISTEEGDMMETNSTDDEKSAAK). Positions 845-1057 (PRKQQHVIST…VSKLKRKEKV (213 aa)) are interactions with SIN3A and HDAC1. At Ser864 the chain carries Phosphoserine. Thr865 is subject to Phosphothreonine. Glycyl lysine isopeptide (Lys-Gly) (interchain with G-Cter in SUMO2) cross-links involve residues Lys873 and Lys878. Ser884 bears the Phosphoserine mark.

Belongs to the SAP130 family. As to quaternary structure, component of a mSin3A corepressor complex that contains SIN3A, SAP130, SUDS3/SAP45, ARID4B/SAP180, HDAC1 and HDAC2. Interacts (released by dead or dying cells) with CLEC4E. Acetylated. Post-translationally, sumoylated with SUMO1.

Its subcellular location is the nucleus. Its function is as follows. Acts as a transcriptional repressor. May function in the assembly and/or enzymatic activity of the mSin3A corepressor complex or in mediating interactions between the complex and other regulatory complexes. The chain is Histone deacetylase complex subunit SAP130 (Sap130) from Mus musculus (Mouse).